We begin with the raw amino-acid sequence, 188 residues long: Inosine triphosphate pyrophosphatase (188 aa).

Position 11-16 (11-16 (TGNKHK)) interacts with ITP. Glu-39 serves as a coordination point for Mg(2+). ITP is bound by residues Lys-51, 67-68 (DT), Lys-84, 143-146 (FGWN), and 171-172 (HR).

The protein belongs to the HAM1 NTPase family. Homodimer. Requires Mg(2+) as cofactor. The cofactor is Mn(2+).

It localises to the cytoplasm. Its subcellular location is the nucleus. It catalyses the reaction ITP + H2O = IMP + diphosphate + H(+). The enzyme catalyses dITP + H2O = dIMP + diphosphate + H(+). It carries out the reaction XTP + H2O = XMP + diphosphate + H(+). In terms of biological role, pyrophosphatase that hydrolyzes non-canonical purine nucleotides such as inosine triphosphate (ITP), deoxyinosine triphosphate (dITP) or xanthosine 5'-triphosphate (XTP) to their respective monophosphate derivatives. The enzyme does not distinguish between the deoxy- and ribose forms. Probably excludes non-canonical purines from RNA and DNA precursor pools, thus preventing their incorporation into RNA and DNA and avoiding chromosomal lesions. The sequence is that of Inosine triphosphate pyrophosphatase from Schizosaccharomyces pombe (strain 972 / ATCC 24843) (Fission yeast).